The chain runs to 738 residues: Isocitrate dehydrogenase [NADP] (738 aa).

NADP(+)-binding residues include N83 and S85. Positions 130, 133, 137, 143, and 253 each coordinate D-threo-isocitrate. N133 lines the NADP(+) pocket. Mg(2+) is bound at residue D346. 2 residues coordinate D-threo-isocitrate: Y416 and R543. D544 and D548 together coordinate Mg(2+). G580, H585, R596, D598, and R645 together coordinate NADP(+).

The protein belongs to the monomeric-type IDH family. Monomer. It depends on Mg(2+) as a cofactor. Mn(2+) serves as cofactor.

It is found in the cytoplasm. It carries out the reaction D-threo-isocitrate + NADP(+) = 2-oxoglutarate + CO2 + NADPH. Its activity is regulated as follows. Weakly inhibited by oxaloacetate, 2-oxoglutarate and citrate. Severely inhibited by oxaloacetate plus glyoxylate. In terms of biological role, catalyzes the oxidative decarboxylation of isocitrate to 2-oxoglutarate and carbon dioxide with the concomitant reduction of NADP(+). Cannot use NAD(+). The chain is Isocitrate dehydrogenase [NADP] from Corynebacterium glutamicum (strain ATCC 13032 / DSM 20300 / JCM 1318 / BCRC 11384 / CCUG 27702 / LMG 3730 / NBRC 12168 / NCIMB 10025 / NRRL B-2784 / 534).